Reading from the N-terminus, the 422-residue chain is Adenylosuccinate synthetase (422 aa).

GTP is bound by residues 12-18 (GDEGKGK) and 40-42 (GHT). Asp13 (proton acceptor) is an active-site residue. Mg(2+) is bound by residues Asp13 and Gly40. Residues 13 to 16 (DEGK), 38 to 41 (NAGH), Thr129, Arg143, Asn221, Thr236, and Arg300 each bind IMP. Catalysis depends on His41, which acts as the Proton donor. 296 to 302 (VTTGRKR) provides a ligand contact to substrate. GTP contacts are provided by residues Arg302, 328 to 330 (KLD), and 410 to 412 (GVG).

It belongs to the adenylosuccinate synthetase family. In terms of assembly, homodimer. Mg(2+) serves as cofactor.

It is found in the cytoplasm. It carries out the reaction IMP + L-aspartate + GTP = N(6)-(1,2-dicarboxyethyl)-AMP + GDP + phosphate + 2 H(+). The protein operates within purine metabolism; AMP biosynthesis via de novo pathway; AMP from IMP: step 1/2. Its function is as follows. Plays an important role in the de novo pathway and in the salvage pathway of purine nucleotide biosynthesis. Catalyzes the first committed step in the biosynthesis of AMP from IMP. This chain is Adenylosuccinate synthetase, found in Pyrenophora tritici-repentis (strain Pt-1C-BFP) (Wheat tan spot fungus).